Here is a 327-residue protein sequence, read N- to C-terminus: WRKY transcription factor WRKY76 (327 aa).

Residues 56–76 are a coiled coil; the sequence is AKILEAKVTQMSEENRRLTEV. The tract at residues 88–134 is disordered; that stretch reads LGLDGSASPPRPVSPLSGKKRSRESMETANSCDANSNRHQGGDADHA. Positions 106–112 match the Nuclear localization signal motif; the sequence is KKRSRES. Residues 114-126 are compositionally biased toward polar residues; sequence ETANSCDANSNRH. Residues 160–226 constitute a DNA-binding region (WRKY); it reads DTSLVVKDGY…YEGEHNHPHP (67 aa).

Belongs to the WRKY group II-a family.

It localises to the nucleus. In terms of biological role, transcription repressor. Interacts specifically with the W box (5'-(T)TGAC[CT]-3'), a frequently occurring elicitor-responsive cis-acting element. Regulates, probably indirectly, the activation of defense-related genes during defense response. Modulates plant innate immunity against X.oryzae pv. oryzae (Xoo). This chain is WRKY transcription factor WRKY76, found in Oryza sativa subsp. indica (Rice).